We begin with the raw amino-acid sequence, 251 residues long: 2,3-bisphosphoglycerate-dependent phosphoglycerate mutase (251 aa).

Substrate-binding positions include 11–18 (RHGESDWN), 24–25 (TG), R63, 90–93 (ERHY), K101, 117–118 (RR), and 184–185 (GN). The Tele-phosphohistidine intermediate role is filled by H12. The active-site Proton donor/acceptor is E90.

Belongs to the phosphoglycerate mutase family. BPG-dependent PGAM subfamily.

The enzyme catalyses (2R)-2-phosphoglycerate = (2R)-3-phosphoglycerate. It participates in carbohydrate degradation; glycolysis; pyruvate from D-glyceraldehyde 3-phosphate: step 3/5. Functionally, catalyzes the interconversion of 2-phosphoglycerate and 3-phosphoglycerate. The protein is 2,3-bisphosphoglycerate-dependent phosphoglycerate mutase of Mycobacterium marinum (strain ATCC BAA-535 / M).